The following is a 380-amino-acid chain: Cytochrome b (380 aa).

Helical transmembrane passes span 34 to 54 (FGSLLGICLLTQILTGLLLAT), 78 to 99 (WLIRNLHANGASFFFICIYLHI), 114 to 134 (WNTGVILLLALMATAFVGYVL), and 179 to 199 (FFALHFLLPFMIAGLAFIHLT). 2 residues coordinate heme b: histidine 84 and histidine 98. Positions 183 and 197 each coordinate heme b. Histidine 202 serves as a coordination point for a ubiquinone. The next 4 helical transmembrane spans lie at 227–247 (LKDILGFIIMFLPLTTLALFS), 289–309 (LGGVLALAASVLVLFLTPLLH), 321–341 (LSQLLFWTLVANLLILTWVGS), and 348–368 (FIIIGQLASLTYFTILLLLFP).

The protein belongs to the cytochrome b family. As to quaternary structure, the cytochrome bc1 complex contains 11 subunits: 3 respiratory subunits (MT-CYB, CYC1 and UQCRFS1), 2 core proteins (UQCRC1 and UQCRC2) and 6 low-molecular weight proteins (UQCRH/QCR6, UQCRB/QCR7, UQCRQ/QCR8, UQCR10/QCR9, UQCR11/QCR10 and a cleavage product of UQCRFS1). This cytochrome bc1 complex then forms a dimer. The cofactor is heme b.

The protein localises to the mitochondrion inner membrane. Functionally, component of the ubiquinol-cytochrome c reductase complex (complex III or cytochrome b-c1 complex) that is part of the mitochondrial respiratory chain. The b-c1 complex mediates electron transfer from ubiquinol to cytochrome c. Contributes to the generation of a proton gradient across the mitochondrial membrane that is then used for ATP synthesis. This Uria aalge (Common mure) protein is Cytochrome b (MT-CYB).